The primary structure comprises 2500 residues: Non-reducing polyketide synthase atr1 (2500 aa).

The N-terminal acylcarrier protein transacylase domain (SAT) stretch occupies residues 13–260 (VFSPQSKAPK…HNPENANLAL (248 aa)). A Ketosynthase family 3 (KS3) domain is found at 385-808 (TDAVAVVGMA…GSNSAVLLCQ (424 aa)). Active-site for beta-ketoacyl synthase activity residues include Cys557, His692, and His731. Residues 908 to 1199 (MTFSGQSRQS…EFPERHTFLD (292 aa)) form a malonyl-CoA:ACP transacylase (MAT) domain region. The active-site For acyl/malonyl transferase activity is the Ser995. The interval 1286–1413 (PRLVEPRTKP…GDFGFTTQTQ (128 aa)) is N-terminal hotdog fold. One can recognise a PKS/mFAS DH domain in the interval 1286 to 1584 (PRLVEPRTKP…FTKLPITRLE (299 aa)). Residues 1287 to 1583 (RLVEPRTKPS…QFTKLPITRL (297 aa)) are product template (PT) domain. The Proton acceptor; for dehydratase activity role is filled by His1317. A C-terminal hotdog fold region spans residues 1433–1584 (SETLKSKRAY…FTKLPITRLE (152 aa)). Asp1495 (proton donor; for dehydratase activity) is an active-site residue. The tract at residues 1594-1649 (AHNTPILKSSQQDSIVSASSSSSTEHSDDDSEDDGSRSPSHSDTSVDSESEAPADN) is disordered. The segment covering 1602–1617 (SSQQDSIVSASSSSST) has biased composition (low complexity). The 77-residue stretch at 1649–1725 (NGAAKKLKSL…RIVAPEMAAK (77 aa)) folds into the Carrier domain. Ser1683 bears the O-(pantetheine 4'-phosphoryl)serine mark. The thioesterase (TE) domain stretch occupies residues 2164–2496 (KSYRIETMPY…YEFIFDVVGR (333 aa)). Residues Ser2285 and Asp2434 each act as for thioesterase activity in the active site.

The enzyme catalyses 6 malonyl-CoA + 2 acetyl-CoA + 2 S-adenosyl-L-methionine + 3 H(+) = 4-O-demethylbarbatate + 2 S-adenosyl-L-homocysteine + 6 CO2 + 8 CoA + H2O. The protein operates within secondary metabolite biosynthesis; terpenoid biosynthesis. Its function is as follows. Non-reducing polyketide synthase; part of the gene cluster that mediates the biosynthesis of atranorin, a depside of polyketide origin that accumulates in the cortical or medullary layers of lichen thalli. The first step in the pathway is performed by the non-reducing polyketide synthase atr1 that produces 4-O-demethylbarbatic acid composed of two 3-methylorsellinic acid (3MOA) moieties from S-adenosyl-L-methionine (SAM), acetyl-CoA and malonyl-CoA units. The pathway continues with the actions of the cytochrome P450 monooygenase atr2 that catalizes the oxidation of c-9 and the O-methyltransferase atr3 that performs the methylation of the carboxyl group to yield atranorin, via the proatranorin II and III intermediates if atr2 acts first, or the proatranorin I intermediate if atr3 acts first. This is Non-reducing polyketide synthase atr1 from Stereocaulon alpinum (Alpine snow lichen).